Here is a 271-residue protein sequence, read N- to C-terminus: Mannosyl-3-phosphoglycerate phosphatase (271 aa).

Catalysis depends on Asp13, which acts as the Nucleophile. Positions 13, 15, and 214 each coordinate Mg(2+).

It belongs to the HAD-like hydrolase superfamily. MPGP family. Requires Mg(2+) as cofactor.

The protein localises to the cytoplasm. It carries out the reaction 2-O-(alpha-D-mannosyl)-3-phosphoglycerate + H2O = (2R)-2-O-(alpha-D-mannosyl)-glycerate + phosphate. The sequence is that of Mannosyl-3-phosphoglycerate phosphatase (yedP) from Escherichia coli O157:H7.